A 155-amino-acid polypeptide reads, in one-letter code: Large ribosomal subunit protein uL13 (155 aa).

Belongs to the universal ribosomal protein uL13 family. As to quaternary structure, part of the 50S ribosomal subunit.

Its function is as follows. This protein is one of the early assembly proteins of the 50S ribosomal subunit, although it is not seen to bind rRNA by itself. It is important during the early stages of 50S assembly. This is Large ribosomal subunit protein uL13 from Rickettsia rickettsii (strain Iowa).